The primary structure comprises 156 residues: Ribosomal RNA large subunit methyltransferase H (156 aa).

S-adenosyl-L-methionine is bound by residues leucine 73, glycine 104, and 123 to 128 (ISSMTL).

The protein belongs to the RNA methyltransferase RlmH family. As to quaternary structure, homodimer.

It localises to the cytoplasm. The enzyme catalyses pseudouridine(1915) in 23S rRNA + S-adenosyl-L-methionine = N(3)-methylpseudouridine(1915) in 23S rRNA + S-adenosyl-L-homocysteine + H(+). Its function is as follows. Specifically methylates the pseudouridine at position 1915 (m3Psi1915) in 23S rRNA. This chain is Ribosomal RNA large subunit methyltransferase H, found in Burkholderia ambifaria (strain ATCC BAA-244 / DSM 16087 / CCUG 44356 / LMG 19182 / AMMD) (Burkholderia cepacia (strain AMMD)).